Consider the following 2273-residue polypeptide: Nonribosomal peptide synthetase hasD (2273 aa).

The tract at residues F100–F446 is adenylation 1. A Carrier 1 domain is found at E588–S664. S625 bears the O-(pantetheine 4'-phosphoryl)serine mark. A condensation 1 region spans residues I696 to N1120. Residues E1156–L1487 are adenylation 2. The region spanning D1634–V1714 is the Carrier 2 domain. S1673 carries the post-translational modification O-(pantetheine 4'-phosphoryl)serine. A condensation 2 region spans residues G1735–D2127. The disordered stretch occupies residues P2174–Q2200. Polar residues predominate over residues E2186–Q2200. The Carrier 3 domain maps to Q2201–I2273. O-(pantetheine 4'-phosphoryl)serine is present on S2235.

Belongs to the NRP synthetase family. Pantetheine 4'-phosphate serves as cofactor.

It participates in secondary metabolite biosynthesis. Its function is as follows. Nonribosomal peptide synthetase; part of the gene cluster that mediates the biosynthesis of hexadehydro-astechrome (HAS), a tryptophan-derived iron(III)-complex that acts as a virulence factor in infected mice. Within the pathway, the NRPS condenses tryptophan and alanine to produce the Trp-Ala dipeptide. The 7-dimethylallyltryptophan synthase hasE then catalyzes the prenylation of the hasD-tethered tryptophan or the resulting tethered Trp-Ala dipeptide at the C-7 position of the indole moiety. HAS biosynthesis continues via tethered intermediates with the succesive actions of the cytochrome P450 monooxygenase hasH, the O-methyltransferase hasC, and the FAD-linked oxidoreductase hasG. The resulting O-methylated diketopiperazine is then released from hasD. Finally, three O-methylated diketopiperazine molecules assemble in a trimeric complex with Fe(III) to produce hexadehydro-astechrome. This is Nonribosomal peptide synthetase hasD from Aspergillus fumigatus (strain CBS 144.89 / FGSC A1163 / CEA10) (Neosartorya fumigata).